A 128-amino-acid polypeptide reads, in one-letter code: Large ribosomal subunit protein uL22 (128 aa).

This sequence belongs to the universal ribosomal protein uL22 family. Part of the 50S ribosomal subunit.

This protein binds specifically to 23S rRNA; its binding is stimulated by other ribosomal proteins, e.g. L4, L17, and L20. It is important during the early stages of 50S assembly. It makes multiple contacts with different domains of the 23S rRNA in the assembled 50S subunit and ribosome. Its function is as follows. The globular domain of the protein is located near the polypeptide exit tunnel on the outside of the subunit, while an extended beta-hairpin is found that lines the wall of the exit tunnel in the center of the 70S ribosome. The protein is Large ribosomal subunit protein uL22 of Methylocella silvestris (strain DSM 15510 / CIP 108128 / LMG 27833 / NCIMB 13906 / BL2).